Reading from the N-terminus, the 313-residue chain is Sororin-like protein 1 (313 aa).

The FGF motif motif lies at 44 to 46; sequence FGF. The segment at 105-287 is disordered; sequence ADENQQSVPT…NDNLKELTPG (183 aa). Residues 107 to 118 are compositionally biased toward polar residues; it reads ENQQSVPTVSIA. Positions 123–134 are enriched in pro residues; the sequence is PELPPSSSPLLP. Over residues 135–154 the composition is skewed to low complexity; that stretch reads PNGSESSSPIPLSLLSTSSL. Polar residues predominate over residues 155–170; it reads QQRKITPSNLSNTSKP. Over residues 184-196 the composition is skewed to basic residues; sequence HGHHLTRLRKKRR. Residues 249–264 are compositionally biased toward basic and acidic residues; the sequence is EKKILKTYHSQDKDTA. The interval 288-310 is C-terminal Sororin domain; the sequence is KKEYLKSIKKYFQDVDDYQLHVV.

It belongs to the sororin family. As to quaternary structure, interacts with Pds5 and Psm3.

Its subcellular location is the nucleus. Its function is as follows. Regulator of sister chromatid cohesion in mitosis stabilizing cohesin complex association with chromatin. Antagonizes the action of wpl1 which stimulates cohesin dissociation from chromatin. Cohesion ensures that chromosome partitioning is accurate in dividing cells and may play an important role in DNA repair. The protein is Sororin-like protein 1 of Schizosaccharomyces pombe (strain 972 / ATCC 24843) (Fission yeast).